Here is a 347-residue protein sequence, read N- to C-terminus: 5-deoxyribose 1-phosphate isomerase (347 aa).

Residues arginine 48–alanine 50, arginine 91, and glutamine 198 contribute to the substrate site. The Proton donor role is filled by aspartate 239. A substrate-binding site is contributed by asparagine 249–lysine 250.

This sequence belongs to the EIF-2B alpha/beta/delta subunits family. DrdI subfamily.

It carries out the reaction 5-deoxy-alpha-D-ribose 1-phosphate = 5-deoxy-D-ribulose 1-phosphate. It participates in carbohydrate degradation. Its function is as follows. Catalyzes the isomerization of 5-deoxy-alpha-D-ribose 1-phosphate to 5-deoxy-D-ribulose 1-phosphate, as part of a 5-deoxyribose salvage pathway that recycles this toxic radical SAM enzyme by-product to mainstream metabolites. This Bacillus cereus (strain ATCC 14579 / DSM 31 / CCUG 7414 / JCM 2152 / NBRC 15305 / NCIMB 9373 / NCTC 2599 / NRRL B-3711) protein is 5-deoxyribose 1-phosphate isomerase.